Here is a 301-residue protein sequence, read N- to C-terminus: Recombination-associated protein RdgC (301 aa).

Belongs to the RdgC family.

It is found in the cytoplasm. The protein resides in the nucleoid. Its function is as follows. May be involved in recombination. The sequence is that of Recombination-associated protein RdgC from Xanthomonas oryzae pv. oryzae (strain KACC10331 / KXO85).